A 328-amino-acid polypeptide reads, in one-letter code: tRNA uridine(34) hydroxylase (328 aa).

The 95-residue stretch at 130–224 (LDEDTVVLDT…YGKDPEVQGE (95 aa)) folds into the Rhodanese domain. Residue cysteine 184 is the Cysteine persulfide intermediate of the active site.

It belongs to the TrhO family.

The enzyme catalyses uridine(34) in tRNA + AH2 + O2 = 5-hydroxyuridine(34) in tRNA + A + H2O. Functionally, catalyzes oxygen-dependent 5-hydroxyuridine (ho5U) modification at position 34 in tRNAs. This Streptococcus pyogenes serotype M49 (strain NZ131) protein is tRNA uridine(34) hydroxylase.